Here is a 174-residue protein sequence, read N- to C-terminus: UPF0340 protein SE_1711 (174 aa).

This sequence belongs to the UPF0340 family.

The protein is UPF0340 protein SE_1711 of Staphylococcus epidermidis (strain ATCC 12228 / FDA PCI 1200).